Here is a 453-residue protein sequence, read N- to C-terminus: Protein vestigial (453 aa).

Residues 145 to 279 (AAGHSLHSSH…GGGLAGSGQG (135 aa)) are disordered. Basic residues predominate over residues 151–177 (HSSHRTHAHSLAHAHTHPHSHTHTHTH). Positions 178–193 (QTKEEDLIVPRSEAEA) are enriched in basic and acidic residues. 2 stretches are compositionally biased toward gly residues: residues 227–253 (HGGG…GGTG) and 267–278 (GSGGGGLAGSGQ). Residues 279–335 (GQAQYLSASCVVFTNYSGDTASQVDEHFSRALNYNNKDSKESSSPMSNRNFPPSFWN) form a ser-rich sd binding domain region.

The Ser-rich protein domain within the C-terminal region interacts with the C-terminus of sd to form a complex which acts as a selector for wing development. Interacts with Dhfr. As to expression, expressed in the developing wing primordia initially along the D/V wing boundary, and by the late third larval instar, maximal expression is seen in cells at the D/V wing disk boundary. Less expression is seen in cells located farther from this boundary.

The protein localises to the nucleus. Its function is as follows. Involved in determining which thoracic imaginal disk cells will form wings and halteres, perhaps by interacting with other nuclear regulatory proteins. When in combination with scalloped (sd), it acts as a transcriptional activation complex that regulates gene expression in the wing. Binding to sd switches the DNA target selectivity of sd. Required and sufficient for cell proliferation at the dorsal/ventral (D/V) boundary of the wing imaginal disk. Also required for cell proliferation in the wing imaginal disk, mediated via activation of E2f. By interacting with Dhfr, may control genes involved in DNA replication. This Drosophila melanogaster (Fruit fly) protein is Protein vestigial (vg).